A 91-amino-acid polypeptide reads, in one-letter code: uncharacterized protein (91 aa).

The next 2 membrane-spanning stretches (helical) occupy residues 22 to 42 (WPVI…AFVV) and 53 to 73 (VAGL…LAAA).

Its subcellular location is the cell membrane. This is an uncharacterized protein from Mycobacterium bovis (strain ATCC BAA-935 / AF2122/97).